We begin with the raw amino-acid sequence, 2563 residues long: Compactin diketide synthase mlcB (2563 aa).

A Ketosynthase family 3 (KS3) domain is found at 29 to 450 (STPIAIVGMG…GSNAHVILES (422 aa)). Active-site for beta-ketoacyl synthase activity residues include Cys-202, His-337, and His-372. An acyl and malonyl transferase region spans residues 568-915 (VFTGQGAQWH…TELISKGYGL (348 aa)). Ser-658 (for malonyltransferase activity) is an active-site residue. Residues 951 to 960 (EPRGSRESKQ) show a composition bias toward basic and acidic residues. The segment at 951–971 (EPRGSRESKQRTHPPHTLIGS) is disordered. The tract at residues 966–1103 (HTLIGSRESL…GLIRSESERS (138 aa)) is N-terminal hotdog fold. In terms of domain architecture, PKS/mFAS DH spans 966–1284 (HTLIGSRESL…FQSVGSSFSD (319 aa)). The active-site Proton acceptor; for dehydratase activity is the His-998. The dehydratase-like stretch occupies residues 998–1010 (HVVGSSIIFPGAG). The C-terminal hotdog fold stretch occupies residues 1121–1284 (DNRSIDPNDL…FQSVGSSFSD (164 aa)). Asp-1187 serves as the catalytic Proton donor; for dehydratase activity. Residues 1542–1579 (YDVVVACQVLHATRCMKRTLSNVRKLLKPGGNLILVET) form a methyltransferase region. A Carrier domain is found at 2485–2562 (EAISIVLKAM…GLVELVVAKC (78 aa)). Ser-2522 is subject to O-(pantetheine 4'-phosphoryl)serine.

It depends on pantetheine 4'-phosphate as a cofactor.

The catalysed reaction is holo-[2-methylbutanoate polyketide synthase] + 2 malonyl-CoA + S-adenosyl-L-methionine + 2 NADPH + 3 H(+) = (S)-2-methylbutanoyl-[2-methylbutanoate polyketide synthase] + S-adenosyl-L-homocysteine + 2 CO2 + 2 NADP(+) + 2 CoA + H2O. The protein operates within polyketide biosynthesis. Its function is as follows. Diketide synthase; part of the gene cluster that mediates the biosynthesis of compactin, also known as mevastatin or ML-236B, and which acts as a potent competitive inhibitor of HMG-CoA reductase. Compactin biosynthesis is performed in two stages. The first stage is catalyzed by the nonaketide synthase mlcA, which belongs to type I polyketide synthases and catalyzes the iterative nine-step formation of the polyketide. This PKS stage is completed by the action of dehydrogenase mlcG, which catalyzes the NADPH-dependent reduction of the unsaturated tetra-, penta- and heptaketide intermediates that arise during the mlcA-mediated biosynthesis of the nonaketide chain and leads to dihydro-ML-236C carboxylate. Covalently bound dihydro-ML-236C carboxylate is released from mlcA by the mlcF esterase. Conversion of dihydro-ML-236C carboxylate into ML-236A carboxylate is subsequently performed with the participation of molecular oxygen and P450 monoogygenase mlcC. Finally, mlcH performs the conversion of ML-236A carboxylate to ML-236B/compactin carboxylate through the addition of the side-chain diketide moiety produced by the diketide synthase mlcB. The polypeptide is Compactin diketide synthase mlcB (mlcB) (Penicillium citrinum).